The sequence spans 627 residues: WPP domain-interacting tail-anchored protein 2 (627 aa).

3 coiled-coil regions span residues 81 to 152, 188 to 218, and 312 to 542; these read CGIL…RRTL, LEKS…KLHY, and TLRE…KILR. Residues 577–597 form a disordered region; it reads SLQEDERTREEPEKQSVSEKS. Over residues 580-597 the composition is skewed to basic and acidic residues; it reads EDERTREEPEKQSVSEKS. Residues 606–626 form a helical membrane-spanning segment; it reads LKHILVVALVFVLFCSFFGVT.

As to quaternary structure, component of Ran complexes at least composed of WIT1 or WIT2, RANGAP1 or RANGAP2, and WIP1 or WIP2 or WIP3. Interacts with KAKU1. Core component of the LINC complex which is composed of inner nuclear membrane SUN domain-containing proteins coupled to outer nuclear membrane WIP and WIT proteins. The LINC complex also involves nucleoskeletal proteins CRWN/LINC and possibly KAKU4 and the cytoskeletal myosin KAKU1. Interacts with WIP1, WIP2 and WIP3. As to expression, ubiquitous.

The protein localises to the membrane. Functionally, together with WIT1, required for the nuclear envelope docking of RANGAP proteins in root tips. Plays a role in nuclear shape determination. As component of the SUN-WIP-WIT2-KAKU1 complex, mediates the transfer of cytoplasmic forces to the nuclear envelope (NE), leading to nuclear shape changes. In Arabidopsis thaliana (Mouse-ear cress), this protein is WPP domain-interacting tail-anchored protein 2 (WIT2).